We begin with the raw amino-acid sequence, 157 residues long: Small ribosomal subunit protein uS7c (157 aa).

The protein belongs to the universal ribosomal protein uS7 family. As to quaternary structure, part of the 30S ribosomal subunit.

It localises to the plastid. The protein localises to the organellar chromatophore. Its function is as follows. One of the primary rRNA binding proteins, it binds directly to 16S rRNA where it nucleates assembly of the head domain of the 30S subunit. The chain is Small ribosomal subunit protein uS7c (rps7) from Paulinella chromatophora.